Consider the following 145-residue polypeptide: SsrA-binding protein (145 aa).

Belongs to the SmpB family.

The protein localises to the cytoplasm. Its function is as follows. Required for rescue of stalled ribosomes mediated by trans-translation. Binds to transfer-messenger RNA (tmRNA), required for stable association of tmRNA with ribosomes. tmRNA and SmpB together mimic tRNA shape, replacing the anticodon stem-loop with SmpB. tmRNA is encoded by the ssrA gene; the 2 termini fold to resemble tRNA(Ala) and it encodes a 'tag peptide', a short internal open reading frame. During trans-translation Ala-aminoacylated tmRNA acts like a tRNA, entering the A-site of stalled ribosomes, displacing the stalled mRNA. The ribosome then switches to translate the ORF on the tmRNA; the nascent peptide is terminated with the 'tag peptide' encoded by the tmRNA and targeted for degradation. The ribosome is freed to recommence translation, which seems to be the essential function of trans-translation. The chain is SsrA-binding protein from Mycoplasmopsis pulmonis (strain UAB CTIP) (Mycoplasma pulmonis).